The following is a 138-amino-acid chain: Putative phosphatidylinositol 3,4,5-trisphosphate 3-phosphatase TPTE2P1 (138 aa).

Residues 1-75 enclose the C2 tensin-type domain; the sequence is MPAAFPCVFP…FAVEILFGMV (75 aa).

In Homo sapiens (Human), this protein is Putative phosphatidylinositol 3,4,5-trisphosphate 3-phosphatase TPTE2P1 (TPTE2P1).